The following is a 1242-amino-acid chain: ATP-dependent helicase/nuclease subunit A (1242 aa).

The UvrD-like helicase ATP-binding domain maps to 12–487 (SRWTDEQWKA…IDLASNFRSR (476 aa)). 33–40 (AAAGSGKT) is an ATP binding site. Residues 514–808 (AAQLKYGADY…RIMTIHSSKG (295 aa)) form the UvrD-like helicase C-terminal domain.

It belongs to the helicase family. AddA subfamily. As to quaternary structure, heterodimer of AddA and AddB/RexB. It depends on Mg(2+) as a cofactor.

The catalysed reaction is Couples ATP hydrolysis with the unwinding of duplex DNA by translocating in the 3'-5' direction.. The enzyme catalyses ATP + H2O = ADP + phosphate + H(+). The heterodimer acts as both an ATP-dependent DNA helicase and an ATP-dependent, dual-direction single-stranded exonuclease. Recognizes the chi site generating a DNA molecule suitable for the initiation of homologous recombination. The AddA nuclease domain is required for chi fragment generation; this subunit has the helicase and 3' -&gt; 5' nuclease activities. The polypeptide is ATP-dependent helicase/nuclease subunit A (Geobacillus kaustophilus (strain HTA426)).